The sequence spans 386 residues: Patatin-10 (386 aa).

The N-terminal stretch at 1–23 is a signal peptide; sequence MATTKSFLILFFMILATTSSTCA. The PNPLA domain occupies 32 to 229; that stretch reads LSIDGGGIKG…TVGDPALLSL (198 aa). Residues 36 to 41 carry the GXGXXG motif; it reads GGGIKG. A GXSXG motif is present at residues 75 to 79; it reads GTSTG. Ser77 (nucleophile) is an active-site residue. Asn115 is a glycosylation site (N-linked (GlcNAc...) asparagine). Asp215 serves as the catalytic Proton acceptor. The DGA/G signature appears at 215-217; the sequence is DGG. A coiled-coil region spans residues 321 to 384; it reads ENALTGTTTE…NRKKLRANKA (64 aa).

This sequence belongs to the patatin family. Tuber.

It is found in the vacuole. Probable lipolytic acyl hydrolase (LAH), an activity which is thought to be involved in the response of tubers to pathogens. In Solanum tuberosum (Potato), this protein is Patatin-10.